The primary structure comprises 1078 residues: Zinc finger protein 827 (1078 aa).

Positions 1–10 are enriched in basic and acidic residues; it reads MPRRKQEQPK. Residues 1 to 14 form a mediates direct interaction with RBBP4 region; that stretch reads MPRRKQEQPKRLPS. The tract at residues 1–76 is disordered; that stretch reads MPRRKQEQPK…PDTSLGSATP (76 aa). The RRK motif; mediates NuRD recruitment to telomeres motif lies at 3 to 5; that stretch reads RRK. Composition is skewed to polar residues over residues 33–42 and 62–76; these read YGNSSETPSE and EQST…SATP. Residues Lys-175, Lys-215, and Lys-225 each participate in a glycyl lysine isopeptide (Lys-Gly) (interchain with G-Cter in SUMO2) cross-link. Positions 307 to 341 are disordered; sequence SLLPDDPLPLPSSEKKPEKVTPPPPPPPPTAQPPQ. The segment covering 326-338 has biased composition (pro residues); it reads VTPPPPPPPPTAQ. Glycyl lysine isopeptide (Lys-Gly) (interchain with G-Cter in SUMO2) cross-links involve residues Lys-357 and Lys-369. 3 consecutive C2H2-type zinc fingers follow at residues 371–393, 399–421, and 430–452; these read FQCP…MVIH, HQCP…MKVH, and FQCQ…MRCH. Glycyl lysine isopeptide (Lys-Gly) (interchain with G-Cter in SUMO2) cross-links involve residues Lys-463, Lys-472, Lys-520, Lys-546, Lys-577, Lys-584, and Lys-594. A disordered region spans residues 466–490; the sequence is IPDPDVKGSPHLSDSGCLGQQREGG. A disordered region spans residues 594 to 640; that stretch reads KEEPKEEESLSMPLPRSSYVFSPEPEVSTPSVSEDPLTPQEGKGSVL. The span at 613-627 shows a compositional bias: low complexity; it reads VFSPEPEVSTPSVSE. Glycyl lysine isopeptide (Lys-Gly) (interchain with G-Cter in SUMO2) cross-links involve residues Lys-636 and Lys-655. Lys-670 is covalently cross-linked (Glycyl lysine isopeptide (Lys-Gly) (interchain with G-Cter in SUMO1); alternate). Lys-670 participates in a covalent cross-link: Glycyl lysine isopeptide (Lys-Gly) (interchain with G-Cter in SUMO2); alternate. Glycyl lysine isopeptide (Lys-Gly) (interchain with G-Cter in SUMO2) cross-links involve residues Lys-701, Lys-707, Lys-739, Lys-775, and Lys-795. 2 consecutive C2H2-type zinc fingers follow at residues 814–836 and 842–864; these read FPCD…LSLH and YKCH…LTVH. Glycyl lysine isopeptide (Lys-Gly) (interchain with G-Cter in SUMO2) cross-links involve residues Lys-867 and Lys-888. C2H2-type zinc fingers lie at residues 894–916 and 926–949; these read YSCH…MSLH and ICCT…GTKH. The span at 945 to 957 shows a compositional bias: basic and acidic residues; sequence IGTKHTGDDRKTP. The interval 945-990 is disordered; it reads IGTKHTGDDRKTPSESNSPSSSSLSTLSDSANGKDDSDSSQKNKGG. Lys-955 participates in a covalent cross-link: Glycyl lysine isopeptide (Lys-Gly) (interchain with G-Cter in SUMO2). Residues 958–974 show a composition bias toward low complexity; sequence SESNSPSSSSLSTLSDS. Positions 976 to 985 are enriched in basic and acidic residues; it reads NGKDDSDSSQ. A Glycyl lysine isopeptide (Lys-Gly) (interchain with G-Cter in SUMO2) cross-link involves residue Lys-1011. 2 C2H2-type zinc fingers span residues 1016-1038 and 1044-1066; these read FECV…LQIH and FECD…KKCH.

Belongs to the krueppel C2H2-type zinc-finger protein family. As to quaternary structure, part of a transcription inhibitory ribonucleoprotein complex composed at least of the circular RNA circZNF827, HNRNPK and HNRNPL. Interacts with the nucleosome remodeling and histone deacetylase/NuRD complex. Interacts with RBBP4; the interaction is direct and recruits RBBP4, a component of the NuRD complex, to telomeres.

It localises to the nucleus. It is found in the chromosome. The protein resides in the telomere. Its function is as follows. As part of a ribonucleoprotein complex composed at least of HNRNPK, HNRNPL and the circular RNA circZNF827 that nucleates the complex on chromatin, may negatively regulate the transcription of genes involved in neuronal differentiation. Could also recruit the nucleosome remodeling and histone deacetylase/NuRD complex to telomeric regions of chromosomes to regulate chromatin remodeling as part of telomere maintenance. This chain is Zinc finger protein 827 (Znf827), found in Mus musculus (Mouse).